The following is a 1182-amino-acid chain: MELNKFDALQIGLASPEKIREWSRGEVKKPETINYRTLKPEKDGLFCERIFGPIKDWECHCGKYKRVRYKGIVCDRCGVEVTKSKVRRERMGHIELAAPVSHIWYFKGIPSRMGLILDMSPRALEKVLYFASYLVLDPKETPLLKKQLLNEKEYREAADKYGEESFEAGMGAESIKKLLQEIDLNQLSEELKENLKTSTGQKKVRIIRRLEVVESFRKSTNKPEWMIMDVIPVIPPDLRPMVQLDGGRFATSDLNDLYRRVINRNNRLKKLLDLGAPDIIVRNEKRMLQEAVDALIDNGRRGRPVTGPGNRPLKSLSDMLKGKQGRFRQNLLGKRVDYSGRSVIVVGPDLKMYQCGLPKEMALELFKPFVMKKLVETGAAHNIKSAKRMVERVQNQVWDVLEEVISDHPVMLNRAPTLHRLGIQAFQPILVEGRAIKLHPLACTAYNADFDGDQMAVHVPLSVEAQAESRFLMLAAHNILKPSDGKPVCVPTQDMVLGSYYLTIDKDGVKGEGKAFTNVDEALMAYQLGEIDIHAKIKVRLEKEIDGKMVSGIIETTIGKLIFNESIPQDLGFIDRSIAGNELLLEINFLVGKKNLGGIIDKCYRKHGPTKTSIMLDKIKAKGYHYSTISAITVSTSDMTVPPNKGELMSEAETAVEKIEKMYRRGFISDDERYERVISTWTKTTEKVADALMDNLDRFNPIFMMADSGARGSKSQIKQLAGMRGLMANPSGKIIELPIKASFREGLDVLEYFISTHGARKGNADTALKTADSGYLTRRLVDVSQDVIVRNEDCGATEGFEVSEIKEGNEVIESLSERLIGRYTSEDIIDPTSKEVLVKQNEYIDEDKAIRIEKVGVKKVKIRSVFTCNCKYGVCAKCYGMDMATAEKISMGEAVGIVAAQSIGEPGTQLTMRTFHTGGVAGSDITQGLPRVEELFEARKPKGLAIVSEVSGTVRIEETKKKRIVFIATESGEEVSYDIPFGSSLKVKNGETIGAGDEITEGSVNPHDIIRIKGVNAVKNYLLSEVQKVYRLQGVDINDKHLEVVIRQMTRKVKVEDSGDTELLPGTMIDIFDFRDENKKVEENGGRPAQARVSLLGITKAALATDSFLSAASFQETTRVLTDAAIKGKSDPLVGLKENVTIGKLIPAGTGMNRYKNIEIDPLVTETNADDENFIAEDKIEG.

Residues C59, C61, C74, and C77 each contribute to the Zn(2+) site. Mg(2+) contacts are provided by D449, D451, and D453. Positions 794, 868, 875, and 878 each coordinate Zn(2+).

Belongs to the RNA polymerase beta' chain family. The RNAP catalytic core consists of 2 alpha, 1 beta, 1 beta' and 1 omega subunit. When a sigma factor is associated with the core the holoenzyme is formed, which can initiate transcription. The cofactor is Mg(2+). Zn(2+) is required as a cofactor.

The catalysed reaction is RNA(n) + a ribonucleoside 5'-triphosphate = RNA(n+1) + diphosphate. Its function is as follows. DNA-dependent RNA polymerase catalyzes the transcription of DNA into RNA using the four ribonucleoside triphosphates as substrates. The protein is DNA-directed RNA polymerase subunit beta' of Clostridium acetobutylicum (strain ATCC 824 / DSM 792 / JCM 1419 / IAM 19013 / LMG 5710 / NBRC 13948 / NRRL B-527 / VKM B-1787 / 2291 / W).